The following is a 154-amino-acid chain: Ribosomal RNA large subunit methyltransferase H (154 aa).

Residues Gly103 and 122 to 127 (FSKLTF) contribute to the S-adenosyl-L-methionine site.

The protein belongs to the RNA methyltransferase RlmH family. In terms of assembly, homodimer.

The protein localises to the cytoplasm. It catalyses the reaction pseudouridine(1915) in 23S rRNA + S-adenosyl-L-methionine = N(3)-methylpseudouridine(1915) in 23S rRNA + S-adenosyl-L-homocysteine + H(+). Functionally, specifically methylates the pseudouridine at position 1915 (m3Psi1915) in 23S rRNA. This Caldicellulosiruptor saccharolyticus (strain ATCC 43494 / DSM 8903 / Tp8T 6331) protein is Ribosomal RNA large subunit methyltransferase H.